Reading from the N-terminus, the 375-residue chain is Flagellin (375 aa).

Belongs to the bacterial flagellin family.

The protein resides in the secreted. The protein localises to the bacterial flagellum. Functionally, flagellin is the subunit protein which polymerizes to form the filaments of bacterial flagella. Flagella are an important component in the invasiveness of B.bacilliformis. The chain is Flagellin from Bartonella bacilliformis.